The chain runs to 1238 residues: Virulence sensor protein BvgS (1238 aa).

An N-terminal signal peptide occupies residues 1–32; the sequence is MPAPHRLYPRSLICLAQALLVWALLAWAPAQA. At 33–307 the chain is on the cytoplasmic side; sequence SQELTLVGKA…REQQWMANHP (275 aa). Residues 308–331 traverse the membrane as a helical segment; it reads VVKVAVLNLFAPFTLFRTDEQFGG. The Periplasmic segment spans residues 332–541; it reads ISAAVLQLLQ…PRTWYAYRNE (210 aa). Residues 542–563 form a helical membrane-spanning segment; it reads IYLLIGLGLLSALLFLSWIVYL. Topologically, residues 564–1238 are cytoplasmic; sequence RRQIRQRKRA…LEQRPHQGQP (675 aa). A PAS domain is found at 580–651; that stretch reads QLEFMRVLID…MHEFLLTRMA (72 aa). A PAC domain is found at 652-708; that stretch reads AEREPRFEDRDVTLHGRTRHVYQWTVPYGDSLGELKGIIGGWIDITERAELLRELHD. A Histidine kinase domain is found at 726–948; sequence TMSHEIRTPM…TVSVDLRLTM (223 aa). Residue His-729 is modified to Phosphohistidine; by autocatalysis. Residues 974 to 1095 form the Response regulatory domain; it reads RVLVVDDHKP…ALRQRLNEAA (122 aa). The residue at position 1023 (Asp-1023) is a 4-aspartylphosphate. The region spanning 1133–1228 is the HPt domain; the sequence is DEALIRQLLE…AALETQLRAW (96 aa). His-1172 is modified (phosphohistidine).

In terms of processing, activation requires a sequential transfer of a phosphate group from a His in the primary transmitter domain, to an Asp in the receiver domain and to a His in the secondary transmitter domain.

The protein resides in the cell inner membrane. It catalyses the reaction ATP + protein L-histidine = ADP + protein N-phospho-L-histidine.. Member of the two-component regulatory system BvgS/BvgA. Phosphorylates BvgA via a four-step phosphorelay in response to environmental signals. The protein is Virulence sensor protein BvgS (bvgS) of Bordetella parapertussis (strain 12822 / ATCC BAA-587 / NCTC 13253).